A 573-amino-acid chain; its full sequence is E3 ubiquitin-protein ligase TRIM23 (573 aa).

The RING-type; degenerate zinc finger occupies C31–R76. Residues E122–L168 form a B box-type; degenerate zinc finger. A coiled-coil region spans residues R351–D378. Residues F390–A573 form an ARF-like region. GTP is bound by residues L411 to T418, V454 to H458, and K513 to V516.

This sequence in the C-terminal section; belongs to the small GTPase superfamily. Arf family. As to quaternary structure, homodimer. Interacts with PSCD1. Interacts with UBE2D2. Interacts with TBK1 (via N-terminal kinase domain) and p62/SQSTM1.

The protein localises to the cytoplasm. The protein resides in the endomembrane system. It is found in the golgi apparatus membrane. It localises to the lysosome membrane. The catalysed reaction is S-ubiquitinyl-[E2 ubiquitin-conjugating enzyme]-L-cysteine + [acceptor protein]-L-lysine = [E2 ubiquitin-conjugating enzyme]-L-cysteine + N(6)-ubiquitinyl-[acceptor protein]-L-lysine.. Its pathway is protein modification; protein ubiquitination. In terms of biological role, acts as an E3 ubiquitin-protein ligase. Plays an essential role in autophagy activation during viral infection. Mechanistically, activates TANK-binding kinase 1/TBK1 by facilitating its dimerization and ability to phosphorylate the selective autophagy receptor SQSTM1. In order to achieve this function, TRIM23 mediates 'Lys-27'-linked auto-ubiquitination of its ADP-ribosylation factor (ARF) domain to induce its GTPase activity and its recruitment to autophagosomes. This is E3 ubiquitin-protein ligase TRIM23 (Trim23) from Rattus norvegicus (Rat).